We begin with the raw amino-acid sequence, 243 residues long: Transcription factor TFIIS homolog (243 aa).

One can recognise a TFIIS central domain in the interval 77–201 (MRDIIQMMFF…SQQKVAEKTS (125 aa)). Residues 202–242 (QLYKCPNCKQRMCTYREVQTRALDEPSTIFCTCKKCGHEFI) form a TFIIS-type zinc finger. Zn(2+)-binding residues include Cys-206, Cys-209, Cys-234, and Cys-237.

The protein belongs to the TFS-II family.

Functionally, putative initiation factor. Necessary for efficient transcription elongation past template-encoded arresting sites. The polypeptide is Transcription factor TFIIS homolog (Ornithodoros (relapsing fever ticks)).